A 747-amino-acid chain; its full sequence is Beta-glucosidase BoGH3A (747 aa).

Residues 1–26 (MIIGIMKTFLLTICFLSVQTGMVAIA) form the signal peptide. Asp273 is a catalytic residue.

Belongs to the glycosyl hydrolase 3 family.

It localises to the periplasm. It catalyses the reaction Hydrolysis of terminal, non-reducing beta-D-glucosyl residues with release of beta-D-glucose.. It participates in glucan metabolism; xyloglucan degradation. Its function is as follows. Catalyzes the hydrolysis of terminal, non-reducing beta-D-glucosyl residues with release of beta-D-glucose in xyloglucan degradation, leading to remove the backbone 'G' units. The protein is Beta-glucosidase BoGH3A of Bacteroides ovatus (strain ATCC 8483 / DSM 1896 / JCM 5824 / BCRC 10623 / CCUG 4943 / NCTC 11153).